Reading from the N-terminus, the 383-residue chain is Caspase a (383 aa).

Positions 1-142 (MAKSIKDHLQ…ETYEIKDKSV (142 aa)) are excised as a propeptide. The 74-residue stretch at 8 to 81 (HLQDALSNIG…RGIKCNAVAE (74 aa)) folds into the Pyrin domain. The disordered stretch occupies residues 87-106 (TGQGGVSQPEPPVPEPIPKD). Catalysis depends on residues His-220 and Cys-270. The propeptide occupies 275-296 (HGRVWASDGEPDEPIEIEDDDF).

This sequence belongs to the peptidase C14A family. As to quaternary structure, heterotetramer that consists of two anti-parallel arranged heterodimers, each one formed by a 20 kDa (p20) and a 10 kDa (p10) subunit. Interacts (via pyrin domain) with pycard (via pyrin domain). Interacts with caspb. Component of NLRP1 inflammasomes. Inflammasomes are supramolecular complexes that assemble in the cytosol in response to pathogens and other damage-associated signals and play critical roles in innate immunity and inflammation. The NLRP1 inflammasome is composed of the signal sensor nlrp1, and the adapter pycard (asc), which recruit effector pro-inflammatory caspases caspa and/or caspb. The interaction between nlrp1 and pycard is required for the sequential recruitment of caspa and then caspb. Caspa is preferentially recruited first and this causes the cleavage of pro-il1b into the midformed il1b. This is followed by the recruitment of caspb, which is activated and cleaves the midformed il1b resulting in il1b maturation. Interacts with caiap. In terms of processing, the two subunits are derived from the precursor sequence by an autocatalytic mechanism.

The protein resides in the inflammasome. Its subcellular location is the cytoplasm. The catalysed reaction is Strict requirement for an Asp residue at position P1 and has a preferred cleavage sequence of Tyr-Val-Ala-Asp-|-.. Functionally, thiol protease which cleaves IL-1 beta (il1b), releasing the mature cytokine which is involved in a variety of inflammatory processes, and mediates apoptosis. Component of the NLRP1 inflammasome, which plays a crucial role in innate immunity and inflammation. In response to pathogens and other damage-associated signals, recruited to the NLRP1 inflammasome in its precursor form. Its subsequent activation causes the cleavage of pro-il1b into the midformed il1b, which then evetually leads to il1b maturation and secretion in the extracellular milieu. Required for the development of the cartilaginous pharyngeal skeleton. This is Caspase a from Danio rerio (Zebrafish).